The following is a 170-amino-acid chain: Adenine phosphoribosyltransferase (170 aa).

This sequence belongs to the purine/pyrimidine phosphoribosyltransferase family. In terms of assembly, homodimer.

It localises to the cytoplasm. It carries out the reaction AMP + diphosphate = 5-phospho-alpha-D-ribose 1-diphosphate + adenine. Its pathway is purine metabolism; AMP biosynthesis via salvage pathway; AMP from adenine: step 1/1. In terms of biological role, catalyzes a salvage reaction resulting in the formation of AMP, that is energically less costly than de novo synthesis. This Bacillus licheniformis (strain ATCC 14580 / DSM 13 / JCM 2505 / CCUG 7422 / NBRC 12200 / NCIMB 9375 / NCTC 10341 / NRRL NRS-1264 / Gibson 46) protein is Adenine phosphoribosyltransferase.